Consider the following 196-residue polypeptide: Peroxiredoxin TSA1 (196 aa).

Positions 3-161 (AQVQKQAPTF…ALRLVEAFQW (159 aa)) constitute a Thioredoxin domain. A Glycyl lysine isopeptide (Lys-Gly) (interchain with G-Cter in ubiquitin) cross-link involves residue lysine 14. Substrate is bound at residue 45 to 47 (TFV). The active-site Cysteine sulfenic acid (-SOH) intermediate is cysteine 48. A Glycyl lysine isopeptide (Lys-Gly) (interchain with G-Cter in ubiquitin) cross-link involves residue lysine 89. Arginine 124 contacts substrate. Lysine 132 participates in a covalent cross-link: Glycyl lysine isopeptide (Lys-Gly) (interchain with G-Cter in ubiquitin). At threonine 174 the chain carries Phosphothreonine.

The protein belongs to the peroxiredoxin family. AhpC/Prx1 subfamily. Homodimer; disulfide-linked, upon oxidation. Interacts with YAP1 via transient disulfide linkages. The enzyme can be inactivated by further oxidation of the cysteine sulfenic acid (C(P)-SOH) to sulphinic acid (C(P)-SO2H) instead of its condensation to a disulfide bond. It can be reactivated by forming a transient disulfide bond with sulfiredoxin SRX1, which reduces the cysteine sulfinic acid in an ATP- and Mg-dependent manner.

The protein resides in the cytoplasm. The enzyme catalyses a hydroperoxide + [thioredoxin]-dithiol = an alcohol + [thioredoxin]-disulfide + H2O. Thiol-specific peroxidase that catalyzes the reduction of hydrogen peroxide and organic hydroperoxides to water and alcohols, respectively. Plays a role in cell protection against oxidative stress by detoxifying peroxides and as sensor of hydrogen peroxide-mediated signaling events. Protects the cell against the oxidative stress caused by nascent-protein misfolding and aggregation. Relays hydrogen peroxide as a signal to the transcription factor YAP1 by inducing the formation of intramolecular disulfide bonds in YAP1, which causes its nuclear accumulation and activation. Can act alternatively as peroxidase and molecular chaperone. Oxidative stress and heat shock exposure cause a reversible shift of the protein structure from low MW species to high MW complexes, triggering a peroxidase-to-chaperone functional switch. The chaperone function of the protein enhances resistance to heat shock. The sequence is that of Peroxiredoxin TSA1 from Saccharomyces cerevisiae (strain ATCC 204508 / S288c) (Baker's yeast).